Here is a 169-residue protein sequence, read N- to C-terminus: Probable inosine/xanthosine triphosphatase (169 aa).

Asp58 lines the Mg(2+) pocket.

This sequence belongs to the YjjX NTPase family. Homodimer. Requires Mg(2+) as cofactor. It depends on Mn(2+) as a cofactor.

It catalyses the reaction XTP + H2O = XDP + phosphate + H(+). It carries out the reaction ITP + H2O = IDP + phosphate + H(+). Functionally, phosphatase that hydrolyzes non-canonical purine nucleotides such as XTP and ITP to their respective diphosphate derivatives. Probably excludes non-canonical purines from DNA/RNA precursor pool, thus preventing their incorporation into DNA/RNA and avoiding chromosomal lesions. The polypeptide is Probable inosine/xanthosine triphosphatase (Archaeoglobus fulgidus (strain ATCC 49558 / DSM 4304 / JCM 9628 / NBRC 100126 / VC-16)).